The following is a 323-amino-acid chain: Putative gluconeogenesis factor (323 aa).

The protein belongs to the gluconeogenesis factor family.

It localises to the cytoplasm. In terms of biological role, required for morphogenesis under gluconeogenic growth conditions. The polypeptide is Putative gluconeogenesis factor (Thermoanaerobacterium thermosulfurigenes (Clostridium thermosulfurogenes)).